We begin with the raw amino-acid sequence, 255 residues long: 14-3-3-like protein GF14 psi (255 aa).

The residue at position 66 (Ser66) is a Phosphoserine. Thr162 bears the Phosphothreonine mark. Ser189 bears the Phosphoserine mark. Phosphothreonine occurs at positions 210 and 238.

This sequence belongs to the 14-3-3 family. As to quaternary structure, component of a DNA binding complex that binds to the G box. Interacts with IDH3, AGT3, GLN1-1, GLN1-2, GLN1-4, SAM1, SAM2, MDH1, METK3 and MDH2. Binds to 1-aminocyclopropane-1-carboxylate synthases (ACS) such as ACS2, ACS5, ACS6, ACS8, and ACS11. Interacts with FD. Interacts with DREB1A and DREB1B in the nucleus. Interacts with CINV1.

It is found in the cytoplasm. The protein resides in the nucleus. Is associated with a DNA binding complex that binds to the G box, a well-characterized cis-acting DNA regulatory element found in plant genes. Involved in the regulation of nutrient metabolism. Reciprocal negative transcription regulation of miR396. Negative regulator of constitutive freezing tolerance and cold acclimation by controlling cold-induced gene expression partially through an ethylene (ET)-dependent pathway; prevents ethylene (ET) biosynthesis, probably by binding 1-aminocyclopropane-1-carboxylate synthases (ACS) to reduce their stability, thus contributing to establish adequate ET levels under both standard and low-temperature conditions. This Arabidopsis thaliana (Mouse-ear cress) protein is 14-3-3-like protein GF14 psi.